We begin with the raw amino-acid sequence, 90 residues long: UPF0329 protein ECU04_1650 (90 aa).

This sequence belongs to the UPF0329 family.

The chain is UPF0329 protein ECU04_1650 from Encephalitozoon cuniculi (strain GB-M1) (Microsporidian parasite).